A 274-amino-acid chain; its full sequence is Ribosomal RNA small subunit methyltransferase A (274 aa).

6 residues coordinate S-adenosyl-L-methionine: Asn28, Leu30, Gly55, Glu77, Asp103, and Asn122.

It belongs to the class I-like SAM-binding methyltransferase superfamily. rRNA adenine N(6)-methyltransferase family. RsmA subfamily.

Its subcellular location is the cytoplasm. It catalyses the reaction adenosine(1518)/adenosine(1519) in 16S rRNA + 4 S-adenosyl-L-methionine = N(6)-dimethyladenosine(1518)/N(6)-dimethyladenosine(1519) in 16S rRNA + 4 S-adenosyl-L-homocysteine + 4 H(+). In terms of biological role, specifically dimethylates two adjacent adenosines (A1518 and A1519) in the loop of a conserved hairpin near the 3'-end of 16S rRNA in the 30S particle. May play a critical role in biogenesis of 30S subunits. The protein is Ribosomal RNA small subunit methyltransferase A of Rhizobium meliloti (strain 1021) (Ensifer meliloti).